Here is a 188-residue protein sequence, read N- to C-terminus: Ribosome-recycling factor (188 aa).

Belongs to the RRF family.

Its subcellular location is the cytoplasm. Responsible for the release of ribosomes from messenger RNA at the termination of protein biosynthesis. May increase the efficiency of translation by recycling ribosomes from one round of translation to another. This chain is Ribosome-recycling factor, found in Anaeromyxobacter dehalogenans (strain 2CP-C).